A 206-amino-acid polypeptide reads, in one-letter code: Thiamine-phosphate synthase (206 aa).

Residues 36–40 (QLRMK) and Asn-68 each bind 4-amino-2-methyl-5-(diphosphooxymethyl)pyrimidine. Asp-69 and Asp-88 together coordinate Mg(2+). Ser-106 provides a ligand contact to 4-amino-2-methyl-5-(diphosphooxymethyl)pyrimidine. 132 to 134 (TNT) serves as a coordination point for 2-[(2R,5Z)-2-carboxy-4-methylthiazol-5(2H)-ylidene]ethyl phosphate. Residue Lys-135 participates in 4-amino-2-methyl-5-(diphosphooxymethyl)pyrimidine binding. 2-[(2R,5Z)-2-carboxy-4-methylthiazol-5(2H)-ylidene]ethyl phosphate is bound by residues Gly-162 and 182-183 (VS).

Belongs to the thiamine-phosphate synthase family. It depends on Mg(2+) as a cofactor.

The enzyme catalyses 2-[(2R,5Z)-2-carboxy-4-methylthiazol-5(2H)-ylidene]ethyl phosphate + 4-amino-2-methyl-5-(diphosphooxymethyl)pyrimidine + 2 H(+) = thiamine phosphate + CO2 + diphosphate. It catalyses the reaction 2-(2-carboxy-4-methylthiazol-5-yl)ethyl phosphate + 4-amino-2-methyl-5-(diphosphooxymethyl)pyrimidine + 2 H(+) = thiamine phosphate + CO2 + diphosphate. The catalysed reaction is 4-methyl-5-(2-phosphooxyethyl)-thiazole + 4-amino-2-methyl-5-(diphosphooxymethyl)pyrimidine + H(+) = thiamine phosphate + diphosphate. It functions in the pathway cofactor biosynthesis; thiamine diphosphate biosynthesis; thiamine phosphate from 4-amino-2-methyl-5-diphosphomethylpyrimidine and 4-methyl-5-(2-phosphoethyl)-thiazole: step 1/1. In terms of biological role, condenses 4-methyl-5-(beta-hydroxyethyl)thiazole monophosphate (THZ-P) and 2-methyl-4-amino-5-hydroxymethyl pyrimidine pyrophosphate (HMP-PP) to form thiamine monophosphate (TMP). In Methanococcus vannielii (strain ATCC 35089 / DSM 1224 / JCM 13029 / OCM 148 / SB), this protein is Thiamine-phosphate synthase.